The primary structure comprises 141 residues: 3-hydroxyacyl-[acyl-carrier-protein] dehydratase FabZ (141 aa).

Histidine 49 is a catalytic residue.

The protein belongs to the thioester dehydratase family. FabZ subfamily.

It localises to the cytoplasm. It catalyses the reaction a (3R)-hydroxyacyl-[ACP] = a (2E)-enoyl-[ACP] + H2O. Functionally, involved in unsaturated fatty acids biosynthesis. Catalyzes the dehydration of short chain beta-hydroxyacyl-ACPs and long chain saturated and unsaturated beta-hydroxyacyl-ACPs. This is 3-hydroxyacyl-[acyl-carrier-protein] dehydratase FabZ from Fusobacterium nucleatum subsp. nucleatum (strain ATCC 25586 / DSM 15643 / BCRC 10681 / CIP 101130 / JCM 8532 / KCTC 2640 / LMG 13131 / VPI 4355).